Consider the following 83-residue polypeptide: Putative defensin-like protein 257 (83 aa).

An N-terminal signal peptide occupies residues 1–25 (MMNVSLKLSFLVFILVIMSNLGSEA). 3 cysteine pairs are disulfide-bonded: cysteine 57-cysteine 73, cysteine 63-cysteine 80, and cysteine 67-cysteine 82.

The protein belongs to the DEFL family.

The protein localises to the secreted. This chain is Putative defensin-like protein 257, found in Arabidopsis thaliana (Mouse-ear cress).